The chain runs to 116 residues: MKNTNLPEETKEPISPGSSHRKQNKTGTKTCFPETTVLSGRDRLKRHREEVAGKVPIPDSWGKEGLLMGWMDFSTFDAAFTSSQIVSARAALMADSGDDAGARGSRPQRLRVESSC.

2 disordered regions span residues 1–33 (MKNTNLPEETKEPISPGSSHRKQNKTGTKTCFP) and 95–116 (DSGDDAGARGSRPQRLRVESSC).

The protein resides in the nucleus. Regulates the blue-light dependent dimerization of CRY2 and formation of photobodies. Inhibits CRY phosphorylation. The chain is Protein BIC2 from Arabidopsis thaliana (Mouse-ear cress).